A 202-amino-acid chain; its full sequence is MSRYRGPRVRIIRRLGALPGLTSKTPQLKSSSINQSTSNKKISQYRIRLEEKQKLRFHYGITERQLLNYVRIARKAKGSTGEVLLQLLEMRLDNVIFRLGMAPTIPGARQLVNHRHILVNDYVVDIPSYRCKPQDFITIKNQQKSETIISKNIEFYQKYKIPNHLTYSSLEKKGLINQILDRESIGLKINELLVVEYYSRQA.

An S4 RNA-binding domain is found at 90 to 153; sequence MRLDNVIFRL…KSETIISKNI (64 aa).

This sequence belongs to the universal ribosomal protein uS4 family. Part of the 30S ribosomal subunit. Contacts protein S5. The interaction surface between S4 and S5 is involved in control of translational fidelity.

The protein resides in the plastid. It is found in the chloroplast. Its function is as follows. One of the primary rRNA binding proteins, it binds directly to 16S rRNA where it nucleates assembly of the body of the 30S subunit. Functionally, with S5 and S12 plays an important role in translational accuracy. This chain is Small ribosomal subunit protein uS4c (rps4), found in Arbusculohypopterygium arbuscula (Moss).